The primary structure comprises 190 residues: dCTP deaminase, dUMP-forming (190 aa).

Residues 101 to 106 (KSSLGR), D119, 127 to 129 (TLE), Q148, Y162, and Q174 contribute to the dCTP site. Residue E129 is the Proton donor/acceptor of the active site. The tract at residues 162-190 (YGSASAGSKYQGQRGPTPSRSYENFIKNT) is disordered. Residues 166 to 190 (SAGSKYQGQRGPTPSRSYENFIKNT) are compositionally biased toward polar residues.

It belongs to the dCTP deaminase family. Homotrimer.

The enzyme catalyses dCTP + 2 H2O = dUMP + NH4(+) + diphosphate. It participates in pyrimidine metabolism; dUMP biosynthesis; dUMP from dCTP: step 1/1. Bifunctional enzyme that catalyzes both the deamination of dCTP to dUTP and the hydrolysis of dUTP to dUMP without releasing the toxic dUTP intermediate. This is dCTP deaminase, dUMP-forming from Mycobacterium leprae (strain Br4923).